Consider the following 497-residue polypeptide: Glycine receptor subunit beta (497 aa).

A signal peptide spans 1–22 (MKFLLTTAFLILISLWVEEAYS). The Extracellular segment spans residues 23-268 (KEKSSKKGKG…IFTLRRQVGF (246 aa)). An N-linked (GlcNAc...) asparagine glycan is attached at asparagine 54. Positions 108 and 174 each coordinate glycine. Cysteine 183 and cysteine 197 are disulfide-bonded. Residue asparagine 242 is glycosylated (N-linked (GlcNAc...) asparagine). A disulfide bond links cysteine 243 and cysteine 255. Threonine 250 serves as a coordination point for glycine. Residues 269-289 (YMMGVYAPTLLIVVLSWLSFW) traverse the membrane as a helical segment. Residues 290 to 294 (INPDA) lie on the Cytoplasmic side of the membrane. A helical membrane pass occupies residues 295–315 (SAARVPLGIFSVLSLASECTT). Over 316–327 (LAAELPKVSYVK) the chain is Extracellular. A helical membrane pass occupies residues 328–349 (ALDVWLIACLLFGFASLVEYAV). Residues 350-472 (VQVMLNNPKR…KPVIPTAAKR (123 aa)) lie on the Cytoplasmic side of the membrane. Threonine 391 is subject to Phosphothreonine. Residues 473–496 (IDLYARALFPFCFLFFNVIYWSIY) form a helical membrane-spanning segment.

This sequence belongs to the ligand-gated ion channel (TC 1.A.9) family. Glycine receptor (TC 1.A.9.3) subfamily. GLRB sub-subfamily. As to quaternary structure, forms heteropentamers with glycin receptor alpha subunits. Heteropentamers with GLRA1 can be composed of two GLRA1 and three GLRB subunits, or three GLRA1 and two GLRB subunits, or four GLRA1 subunits and one GLRB subunit. Forms heteropentamers with GLRA2. Functional GLRB-GLRA2 heteropentamers contain four GLRA2 subunits and one GLRB subunit, although alternative subunit composition cannot be excluded. Forms a heteropentamer with GLRA3. Interacts with GPHN.

The protein localises to the postsynaptic cell membrane. It is found in the synapse. Its subcellular location is the cell projection. The protein resides in the dendrite. It localises to the cell membrane. The protein localises to the cytoplasm. The catalysed reaction is chloride(in) = chloride(out). Its activity is regulated as follows. Channel opening is triggered by extracellular glycine. Heteropentameric channels composed of GLRB and GLRA1 are activated by lower glycine levels than homopentameric GLRA1. Functionally, subunit of heteromeric glycine-gated chloride channels. Plays an important role in the down-regulation of neuronal excitability. Contributes to the generation of inhibitory postsynaptic currents. The sequence is that of Glycine receptor subunit beta (GLRB) from Homo sapiens (Human).